The chain runs to 89 residues: Serine-rich and transmembrane domain-containing 2 (89 aa).

Asn11 is a glycosylation site (N-linked (GlcNAc...) asparagine). Residues 38-58 form a helical membrane-spanning segment; that stretch reads YVGLFLSLLAILLILLFTMLL.

It is found in the membrane. This chain is Serine-rich and transmembrane domain-containing 2, found in Mus musculus (Mouse).